The chain runs to 106 residues: MIQITPAAQAAIKGAIEGAGQPVAGLRLMVQSGGCAGLKYGMSLELTEAPDDLVVEAEGLRVLIDPQSGTYLNGVTIDFVTSLEGTGFVFDNPNAKGGCGCGKSFC.

It belongs to the HesB/IscA family.

This is an uncharacterized protein from Cereibacter sphaeroides (Rhodobacter sphaeroides).